A 256-amino-acid chain; its full sequence is Bialaphos biosynthetic pathway regulatory protein (256 aa).

The region spanning 184–249 is the HTH luxR-type domain; sequence ETADAIDVSD…QLGARAAECR (66 aa). Positions 208–227 form a DNA-binding region, H-T-H motif; the sequence is DVAMARSLGISTRTLRRVIT.

Involved in the regulation of the biosynthesis of phosphinothricin tripeptide (PTT), also known as bialaphos (BA), a natural-product antibiotic and potent herbicide. The polypeptide is Bialaphos biosynthetic pathway regulatory protein (brpA) (Streptomyces hygroscopicus).